Reading from the N-terminus, the 513-residue chain is Glutamate--tRNA ligase 2 (513 aa).

The short motif at 11 to 21 is the 'HIGH' region element; the sequence is PSPSGFLHIGS. The 'KMSKS' region motif lies at 240 to 244; sequence KLSKR. ATP is bound at residue lysine 243.

This sequence belongs to the class-I aminoacyl-tRNA synthetase family. Glutamate--tRNA ligase type 1 subfamily. Monomer.

Its subcellular location is the cytoplasm. The catalysed reaction is tRNA(Glu) + L-glutamate + ATP = L-glutamyl-tRNA(Glu) + AMP + diphosphate. Its function is as follows. Catalyzes the attachment of glutamate to tRNA(Glu) in a two-step reaction: glutamate is first activated by ATP to form Glu-AMP and then transferred to the acceptor end of tRNA(Glu). This is Glutamate--tRNA ligase 2 from Rickettsia massiliae (strain Mtu5).